Consider the following 190-residue polypeptide: Protein GrpE (190 aa).

The segment at 1-33 (MSEQEKDQNNAEPQVETVEEQQAAAAAEAVEPT) is disordered. Low complexity predominate over residues 11–32 (AEPQVETVEEQQAAAAAEAVEP).

It belongs to the GrpE family. As to quaternary structure, homodimer.

Its subcellular location is the cytoplasm. Its function is as follows. Participates actively in the response to hyperosmotic and heat shock by preventing the aggregation of stress-denatured proteins, in association with DnaK and GrpE. It is the nucleotide exchange factor for DnaK and may function as a thermosensor. Unfolded proteins bind initially to DnaJ; upon interaction with the DnaJ-bound protein, DnaK hydrolyzes its bound ATP, resulting in the formation of a stable complex. GrpE releases ADP from DnaK; ATP binding to DnaK triggers the release of the substrate protein, thus completing the reaction cycle. Several rounds of ATP-dependent interactions between DnaJ, DnaK and GrpE are required for fully efficient folding. This chain is Protein GrpE, found in Alcanivorax borkumensis (strain ATCC 700651 / DSM 11573 / NCIMB 13689 / SK2).